Reading from the N-terminus, the 387-residue chain is Pepsin II-1 (387 aa).

An N-terminal signal peptide occupies residues 1 to 15 (MKWLLLLGLLALSEC). A propeptide spans 16 to 59 (IVHKVPLVRKKSLRKNLIEKGLLQDYLKTHTPNLATKYFPKETF) (activation peptide). The Peptidase A1 domain maps to 75–384 (YFGTISIGTP…DRANNQVGLA (310 aa)). The active site involves aspartate 93. A disulfide bridge links cysteine 106 with cysteine 111. A Phosphoserine modification is found at serine 129. Cysteine 267 and cysteine 271 are disulfide-bonded. Aspartate 276 is an active-site residue. An intrachain disulfide couples cysteine 310 to cysteine 343.

It belongs to the peptidase A1 family.

Its subcellular location is the secreted. The catalysed reaction is Preferential cleavage: hydrophobic, preferably aromatic, residues in P1 and P1' positions. Cleaves 1-Phe-|-Val-2, 4-Gln-|-His-5, 13-Glu-|-Ala-14, 14-Ala-|-Leu-15, 15-Leu-|-Tyr-16, 16-Tyr-|-Leu-17, 23-Gly-|-Phe-24, 24-Phe-|-Phe-25 and 25-Phe-|-Tyr-26 bonds in the B chain of insulin.. Its function is as follows. Shows particularly broad specificity; although bonds involving phenylalanine and leucine are preferred, many others are also cleaved to some extent. This chain is Pepsin II-1, found in Oryctolagus cuniculus (Rabbit).